A 100-amino-acid chain; its full sequence is Phosphoribosyl-ATP pyrophosphatase (100 aa).

The protein belongs to the PRA-PH family.

The protein localises to the cytoplasm. The enzyme catalyses 1-(5-phospho-beta-D-ribosyl)-ATP + H2O = 1-(5-phospho-beta-D-ribosyl)-5'-AMP + diphosphate + H(+). The protein operates within amino-acid biosynthesis; L-histidine biosynthesis; L-histidine from 5-phospho-alpha-D-ribose 1-diphosphate: step 2/9. The protein is Phosphoribosyl-ATP pyrophosphatase of Haloquadratum walsbyi (strain DSM 16790 / HBSQ001).